Consider the following 107-residue polypeptide: Non-structural protein 1, peptide 1 (107 aa).

Residues 39 to 59 (ILLAAGVGIIATLLVLLLCSC) traverse the membrane as a helical segment.

This sequence belongs to the rotavirus B NSP1-1 family.

It localises to the host membrane. In Homo sapiens (Human), this protein is Non-structural protein 1, peptide 1.